The following is a 127-amino-acid chain: Large ribosomal subunit protein bL19 (127 aa).

This sequence belongs to the bacterial ribosomal protein bL19 family.

Functionally, this protein is located at the 30S-50S ribosomal subunit interface and may play a role in the structure and function of the aminoacyl-tRNA binding site. The chain is Large ribosomal subunit protein bL19 from Acidovorax ebreus (strain TPSY) (Diaphorobacter sp. (strain TPSY)).